The chain runs to 279 residues: Large ribosomal subunit protein uL2 (279 aa).

The disordered stretch occupies residues 223-279 (VVMNPVDHPHGGGEGRTSGGRHPVTPWGKPTKGKRTRSNKKTDSLIMRSRHLAKKKR). The span at 270–279 (RSRHLAKKKR) shows a compositional bias: basic residues.

This sequence belongs to the universal ribosomal protein uL2 family. In terms of assembly, part of the 50S ribosomal subunit. Forms a bridge to the 30S subunit in the 70S ribosome.

Its function is as follows. One of the primary rRNA binding proteins. Required for association of the 30S and 50S subunits to form the 70S ribosome, for tRNA binding and peptide bond formation. It has been suggested to have peptidyltransferase activity; this is somewhat controversial. Makes several contacts with the 16S rRNA in the 70S ribosome. This is Large ribosomal subunit protein uL2 from Rhodospirillum rubrum (strain ATCC 11170 / ATH 1.1.1 / DSM 467 / LMG 4362 / NCIMB 8255 / S1).